A 190-amino-acid polypeptide reads, in one-letter code: Large ribosomal subunit protein uL10 (190 aa).

The interval 170–190 is disordered; that stretch reads AAGAPAEAAPVEAPAAETVDA.

This sequence belongs to the universal ribosomal protein uL10 family. Part of the ribosomal stalk of the 50S ribosomal subunit. The N-terminus interacts with L11 and the large rRNA to form the base of the stalk. The C-terminus forms an elongated spine to which L12 dimers bind in a sequential fashion forming a multimeric L10(L12)X complex.

Its function is as follows. Forms part of the ribosomal stalk, playing a central role in the interaction of the ribosome with GTP-bound translation factors. This is Large ribosomal subunit protein uL10 from Kineococcus radiotolerans (strain ATCC BAA-149 / DSM 14245 / SRS30216).